Here is a 114-residue protein sequence, read N- to C-terminus: IVMTQTPSSKSVPVGDTVTINCQAAQSVYSNNRLSWFQQKPGQPPKGLIYYASTLASGVQQDPSRFKGSGSGTQFTLTISDVQCBBAATVYYCQGYKSSDTRAFGGGTEVVVKG.

A framework-1 region spans residues 1 to 22 (IVMTQTPSSKSVPVGDTVTINC). The complementarity-determining-1 stretch occupies residues 23–35 (QAAQSVYSNNRLS). Residues 36 to 50 (WFQQKPGQPPKGLIY) form a framework-2 region. Residues 51–57 (YASTLAS) are complementarity-determining-2. Residues 58-93 (GVQQDPSRFKGSGSGTQFTLTISDVQCBBAATVYYC) form a framework-3 region. The interval 94–103 (QGYKSSDTRA) is complementarity-determining-3. Residues 104 to 113 (FGGGTEVVVK) form a framework-4 region.

In Oryctolagus cuniculus (Rabbit), this protein is Ig kappa chain V region AH80-5.